The primary structure comprises 282 residues: ATP synthase gamma chain (282 aa).

The protein belongs to the ATPase gamma chain family. As to quaternary structure, F-type ATPases have 2 components, CF(1) - the catalytic core - and CF(0) - the membrane proton channel. CF(1) has five subunits: alpha(3), beta(3), gamma(1), delta(1), epsilon(1). CF(0) has three main subunits: a, b and c.

The protein resides in the cell inner membrane. In terms of biological role, produces ATP from ADP in the presence of a proton gradient across the membrane. The gamma chain is believed to be important in regulating ATPase activity and the flow of protons through the CF(0) complex. This is ATP synthase gamma chain from Fusobacterium nucleatum subsp. nucleatum (strain ATCC 25586 / DSM 15643 / BCRC 10681 / CIP 101130 / JCM 8532 / KCTC 2640 / LMG 13131 / VPI 4355).